Reading from the N-terminus, the 374-residue chain is Peptide chain release factor 2 (374 aa).

An N5-methylglutamine modification is found at Gln-248.

This sequence belongs to the prokaryotic/mitochondrial release factor family. Methylated by PrmC. Methylation increases the termination efficiency of RF2.

It localises to the cytoplasm. Its function is as follows. Peptide chain release factor 2 directs the termination of translation in response to the peptide chain termination codons UGA and UAA. The protein is Peptide chain release factor 2 of Thermomicrobium roseum (strain ATCC 27502 / DSM 5159 / P-2).